Here is a 192-residue protein sequence, read N- to C-terminus: MDSGRDSGNDSGSVNMARARVALTEHTRYVHDFPAEGVLFEDLTPVLANAEAFAAVVDAQAEAAEELGAEIIGGLDARGFLLGSAVAYKLGLGVIAIRKKGKLPPPVVTQDYDLEYGSAALELPAEGLDLEGRRVVLIDDVLATGGTLAAARKLIETCGGNVTGYVLAIEVGGLGGRERLGDIPVHVIRDPQ.

It belongs to the purine/pyrimidine phosphoribosyltransferase family. In terms of assembly, homodimer.

It localises to the cytoplasm. It carries out the reaction AMP + diphosphate = 5-phospho-alpha-D-ribose 1-diphosphate + adenine. It participates in purine metabolism; AMP biosynthesis via salvage pathway; AMP from adenine: step 1/1. In terms of biological role, catalyzes a salvage reaction resulting in the formation of AMP, that is energically less costly than de novo synthesis. The sequence is that of Adenine phosphoribosyltransferase from Corynebacterium efficiens (strain DSM 44549 / YS-314 / AJ 12310 / JCM 11189 / NBRC 100395).